Consider the following 189-residue polypeptide: Ribosome maturation factor RimM (189 aa).

Positions 118 to 189 (SGEYYWDDLI…IILVDWDENF (72 aa)) constitute a PRC barrel domain.

The protein belongs to the RimM family. In terms of assembly, binds ribosomal protein uS19.

The protein resides in the cytoplasm. An accessory protein needed during the final step in the assembly of 30S ribosomal subunit, possibly for assembly of the head region. Essential for efficient processing of 16S rRNA. May be needed both before and after RbfA during the maturation of 16S rRNA. It has affinity for free ribosomal 30S subunits but not for 70S ribosomes. The chain is Ribosome maturation factor RimM from Ruthia magnifica subsp. Calyptogena magnifica.